The chain runs to 266 residues: GTP cyclohydrolase FolE2 (266 aa).

It belongs to the GTP cyclohydrolase IV family.

The enzyme catalyses GTP + H2O = 7,8-dihydroneopterin 3'-triphosphate + formate + H(+). It functions in the pathway cofactor biosynthesis; 7,8-dihydroneopterin triphosphate biosynthesis; 7,8-dihydroneopterin triphosphate from GTP: step 1/1. In terms of biological role, converts GTP to 7,8-dihydroneopterin triphosphate. The sequence is that of GTP cyclohydrolase FolE2 from Syntrophotalea carbinolica (strain DSM 2380 / NBRC 103641 / GraBd1) (Pelobacter carbinolicus).